The chain runs to 78 residues: CDC42 small effector protein 1 (78 aa).

S-palmitoyl cysteine attachment occurs at residues Cys-10 and Cys-11. The 14-residue stretch at 30–43 (IGEPMNFVHLTHIG) folds into the CRIB domain.

The protein belongs to the CDC42SE/SPEC family.

Its subcellular location is the cytoplasm. It localises to the cytoskeleton. It is found in the cell membrane. Its function is as follows. Probably involved in the organization of the actin cytoskeleton by acting downstream of CDC42, inducing actin filament assembly. This Gallus gallus (Chicken) protein is CDC42 small effector protein 1 (CDC42SE1).